The following is a 62-amino-acid chain: Venom peptide SjAPI-2 (62 aa).

Intrachain disulfides connect Cys-4/Cys-40, Cys-14/Cys-36, Cys-18/Cys-32, Cys-22/Cys-60, and Cys-42/Cys-54. The TIL domain maps to 4 to 60 (CRISGEVFTWCGTTCPLTCENFRNPPKHCPQGCFVGCMCRRGLVRHRNGRCVRPPRC).

It belongs to the serine protease inhibitor-like (TIL domain-containing) family. As to expression, expressed by the venom gland.

It is found in the secreted. Functionally, serine protease inhibitor. In Scorpiops jendeki (Scorpion), this protein is Venom peptide SjAPI-2.